Here is a 132-residue protein sequence, read N- to C-terminus: MNMIEQLEQEEAARVLGEKTIPDFSAGDTLRVHVRIKEGERERIQVFEGVCIARNGGGLNESYTVRKISFGEGVERVFPLYSPNVEQIEIKRKGKVRRAKLYYLRDRRGKSARIAERVTGRGIEKREPKKKG.

It belongs to the bacterial ribosomal protein bL19 family.

Functionally, this protein is located at the 30S-50S ribosomal subunit interface and may play a role in the structure and function of the aminoacyl-tRNA binding site. The protein is Large ribosomal subunit protein bL19 of Maricaulis maris (strain MCS10) (Caulobacter maris).